Reading from the N-terminus, the 292-residue chain is Ribosome-inactivating protein saporin-2 (292 aa).

Residues 1-24 form the signal peptide; that stretch reads MKIYVVATIAWILLQFSAWTTTDA. The active site involves glutamate 200.

Belongs to the ribosome-inactivating protein family. Type 1 RIP subfamily.

It carries out the reaction Endohydrolysis of the N-glycosidic bond at one specific adenosine on the 28S rRNA.. Ribosome-inactivating protein of type 1, inhibits protein synthesis in animal cells. Useful as immunotoxin for pharmacological applications. The polypeptide is Ribosome-inactivating protein saporin-2 (SAP2) (Saponaria officinalis (Common soapwort)).